The sequence spans 636 residues: MYKYGTVVDPAMTTNRRSRLSGFRCASTARVTATLLLSFLAFSPSSASSDFGDRFHDDIVLPPGPVLPSAPEIPEPAEHTFSLRHIYHHGTHLHPSLHRKRDVVHEQSRVYLAAEDDFSEYDILRLKAKSRPEPIHRLADRRPSVVDPMVAESRQRGYAAVLDASAWTMDQVSSPDIKDKDTVLTLALMTANAYVEHDTDADWEDVGERWNRSADFGWESDGLRGHVFVDDTNSTIVIGLKGTTTAVFDGEGTTTNDKVNDNLFFSCCCAQQGQWTWHQVCDCATGTYSCNNTCVVQALREENRYYGAARELYSNVTELYPDAQVWLTGHSLGGAVTSMLGMTYGLPVVTFEAVPEALPASRLGLPVPPGASAEYPQMRENTGTFHFGHTADPVYIGTCNGATASCTYGGYAMESTCHAGYECVYDVVADKGWRVGIGTHRIRSVIDDVIKKYDGVPECKRTPECRDCAQWKMYESNGTETTTTSSPSTTSTTRTRTRTSTCETPGWWGCLDKTTPVTTTTSTTSSSTSTCKTPGWFGCKDKTTSESSTTTTTEASPTTTCETPGRFWGCRDEVEATTTAKPGQVTNVPVTAAPTGTTDDSLSTALPETQRCLARNWFGICKEWAIDDLEFATDEM.

At 1 to 19 the chain is on the cytoplasmic side; the sequence is MYKYGTVVDPAMTTNRRSR. The helical; Signal-anchor for type II membrane protein transmembrane segment at 20 to 42 threads the bilayer; it reads LSGFRCASTARVTATLLLSFLAF. Residues 43–636 are Lumenal-facing; sequence SPSSASSDFG…DDLEFATDEM (594 aa). 5 N-linked (GlcNAc...) asparagine glycosylation sites follow: Asn-211, Asn-233, Asn-291, Asn-315, and Asn-477. The segment at 478 to 500 is disordered; the sequence is GTETTTTSSPSTTSTTRTRTRTS. The segment covering 479–500 has biased composition (low complexity); the sequence is TETTTTSSPSTTSTTRTRTRTS.

It belongs to the AB hydrolase superfamily. Lipase family. In terms of assembly, binds to both phosphatidylinositol (PI) and phosphatidylinositol 3,5-bisphosphate (PIP2).

It localises to the endosome. Its subcellular location is the multivesicular body membrane. It is found in the prevacuolar compartment membrane. It catalyses the reaction a triacylglycerol + H2O = a diacylglycerol + a fatty acid + H(+). Its function is as follows. Lipase which is essential for lysis of subvacuolar cytoplasm to vacuole targeted bodies and intravacuolar autophagic bodies. Involved in the lysis of intravacuolar multivesicular body (MVB) vesicles. The intravacuolar membrane disintegration by ATG15 is critical to life span extension. Autophagy is required for proper vegetative growth, asexual/sexual reproduction, and full virulence. Autophagy is particularly involved in the biosynthesis of deoxynivalenol (DON), an important virulence determinant. The sequence is that of Putative lipase ATG15 from Gibberella zeae (strain ATCC MYA-4620 / CBS 123657 / FGSC 9075 / NRRL 31084 / PH-1) (Wheat head blight fungus).